The following is a 179-amino-acid chain: ATP synthase subunit delta (179 aa).

It belongs to the ATPase delta chain family. In terms of assembly, F-type ATPases have 2 components, F(1) - the catalytic core - and F(0) - the membrane proton channel. F(1) has five subunits: alpha(3), beta(3), gamma(1), delta(1), epsilon(1). F(0) has three main subunits: a(1), b(2) and c(10-14). The alpha and beta chains form an alternating ring which encloses part of the gamma chain. F(1) is attached to F(0) by a central stalk formed by the gamma and epsilon chains, while a peripheral stalk is formed by the delta and b chains.

The protein localises to the cell membrane. Functionally, f(1)F(0) ATP synthase produces ATP from ADP in the presence of a proton or sodium gradient. F-type ATPases consist of two structural domains, F(1) containing the extramembraneous catalytic core and F(0) containing the membrane proton channel, linked together by a central stalk and a peripheral stalk. During catalysis, ATP synthesis in the catalytic domain of F(1) is coupled via a rotary mechanism of the central stalk subunits to proton translocation. Its function is as follows. This protein is part of the stalk that links CF(0) to CF(1). It either transmits conformational changes from CF(0) to CF(1) or is implicated in proton conduction. This is ATP synthase subunit delta from Clostridium beijerinckii (strain ATCC 51743 / NCIMB 8052) (Clostridium acetobutylicum).